Consider the following 238-residue polypeptide: U2 small nuclear ribonucleoprotein A' (238 aa).

LRR repeat units lie at residues 53–74 (PTHILDLTNNDLIMIPDLSRRD), 75–95 (DIHTLLLGRNNIVEVDGRLLP), and 97–118 (NVQNLTLSNNSIRRFEDLQRLR). One can recognise an LRRCT domain in the interval 132–170 (NQVCHLANYREHVLRLVPHLETLDFQNVTAEERKSAMSF). The disordered stretch occupies residues 167–189 (AMSFPRQADGDTLGPVNTAIRDN).

This sequence belongs to the U2 small nuclear ribonucleoprotein A family. Belongs to the CWC complex (or CEF1-associated complex), a spliceosome sub-complex reminiscent of a late-stage spliceosome composed of the U2, U5 and U6 snRNAs and at least BUD13, BUD31, BRR2, CDC40, CEF1, CLF1, CUS1, CWC2, CWC15, CWC21, CWC22, CWC23, CWC24, CWC25, CWC27, ECM2, HSH155, IST3, ISY1, LEA1, MSL1, NTC20, PRP8, PRP9, PRP11, PRP19, PRP21, PRP22, PRP45, PRP46, SLU7, SMB1, SMD1, SMD2, SMD3, SMX2, SMX3, SNT309, SNU114, SPP2, SYF1, SYF2, RSE1 and YJU2. Interacts with MSL1.

The protein localises to the nucleus. Functionally, involved in pre-mRNA splicing. Associates to U2 snRNA in a MSL1 dependent manner and is required for normal accumulation of U2 snRNA. Required for the spliceosome assembly and the efficient addition of U2 snRNP onto the pre-mRNA. The protein is U2 small nuclear ribonucleoprotein A' (LEA1) of Saccharomyces cerevisiae (strain ATCC 204508 / S288c) (Baker's yeast).